Here is a 495-residue protein sequence, read N- to C-terminus: E3 ubiquitin-protein ligase RAD18 (495 aa).

Met-1 carries the post-translational modification N-acetylmethionine. Residues 25–64 (CGICFEYFNIAMIIPQCSHNYCSLCIRKFLSYKTQCPTCC) form an RING-type zinc finger. Residues Ser-99 and Ser-103 each carry the phosphoserine modification. Residue Thr-118 is modified to Phosphothreonine. A phosphoserine mark is found at Ser-122, Ser-125, Ser-142, Ser-158, and Ser-164. The interval 152 to 197 (ENKSKFSPQKEASPAAKTKETRSVEEIAPDPSEAKRPEPPSTSTLK) is disordered. Residues 201–228 (KVDCPVCGVNIPESHINKHLDSCLSREE) form a UBZ4-type zinc finger. Cys-204, Cys-207, His-219, and Cys-223 together coordinate Zn(2+). An LR motif motif is present at residues 232-240 (SLRSSVHKR). In terms of domain architecture, SAP spans 248 to 282 (YNLLSDRDLKKKLKEHGLSIQGNKQQLIKRHQEFV). Ser-322 carries the phosphoserine modification. Lys-376 is covalently cross-linked (Glycyl lysine isopeptide (Lys-Gly) (interchain with G-Cter in SUMO2)). Disordered stretches follow at residues 400–423 (NHFS…DSSS) and 456–495 (AWEA…RNRN). Positions 410 to 421 (PEELEPDREEDS) are enriched in acidic residues. 2 positions are modified to phosphoserine: Ser-471 and Ser-483. Over residues 479–495 (RAAESAEIEPRNKRNRN) the composition is skewed to basic and acidic residues.

This sequence belongs to the RAD18 family. In terms of assembly, homodimer. Interacts with UBE2A and UBE2B, one homodimer binding one molecule of UBE2B. Interacts with SHPRH. Interacts with HLTF. Interacts with SPRTN; leading to enhance chromatin association of RAD18 and RAD18-mediated PCNA ubiquitination and translesion DNA synthesis. Interacts (via C-terminus and phosphorylated form) with SLF1 (via BRCT domains); this interaction is required for efficient repair of UV-induced DNA damage. Interacts with SLF2. Interacts with SMC5; this interaction is increased in a SLF1 or SLF2-dependent manner. Interacts with DNA damage up-regulated protein DDUP. Forms a complex with DDUP and H2AX following DDUP phosphorylation.

The protein resides in the nucleus. Its subcellular location is the cytoplasm. It localises to the cytoskeleton. It is found in the microtubule organizing center. The protein localises to the centrosome. It carries out the reaction S-ubiquitinyl-[E2 ubiquitin-conjugating enzyme]-L-cysteine + [acceptor protein]-L-lysine = [E2 ubiquitin-conjugating enzyme]-L-cysteine + N(6)-ubiquitinyl-[acceptor protein]-L-lysine.. Its pathway is protein modification; protein ubiquitination. Its function is as follows. E3 ubiquitin-protein ligase involved in postreplication repair of UV-damaged DNA. Postreplication repair functions in gap-filling of a daughter strand on replication of damaged DNA. Associates to the E2 ubiquitin conjugating enzyme UBE2B to form the UBE2B-RAD18 ubiquitin ligase complex involved in mono-ubiquitination of DNA-associated PCNA on 'Lys-164'. Has ssDNA binding activity. In Homo sapiens (Human), this protein is E3 ubiquitin-protein ligase RAD18 (RAD18).